The sequence spans 546 residues: CTP synthase (546 aa).

The tract at residues 1 to 269 (MNSNTKIIFV…DAKLVELLNL (269 aa)) is amidoligase domain. CTP is bound at residue S16. Residue S16 coordinates UTP. ATP is bound by residues 17 to 22 (SLGKGV) and D74. Mg(2+) contacts are provided by D74 and E143. CTP is bound by residues 150-152 (DIE), 190-195 (KTKPTQ), and K226. Residues 190–195 (KTKPTQ) and K226 each bind UTP. The Glutamine amidotransferase type-1 domain occupies 294–546 (TIAMVGKYVS…IQAAIENSNN (253 aa)). G356 lines the L-glutamine pocket. Catalysis depends on C383, which acts as the Nucleophile; for glutamine hydrolysis. Residues 384–387 (LGMQ), E407, and R474 each bind L-glutamine. Active-site residues include H519 and E521.

This sequence belongs to the CTP synthase family. Homotetramer.

The catalysed reaction is UTP + L-glutamine + ATP + H2O = CTP + L-glutamate + ADP + phosphate + 2 H(+). The enzyme catalyses L-glutamine + H2O = L-glutamate + NH4(+). It carries out the reaction UTP + NH4(+) + ATP = CTP + ADP + phosphate + 2 H(+). The protein operates within pyrimidine metabolism; CTP biosynthesis via de novo pathway; CTP from UDP: step 2/2. Allosterically activated by GTP, when glutamine is the substrate; GTP has no effect on the reaction when ammonia is the substrate. The allosteric effector GTP functions by stabilizing the protein conformation that binds the tetrahedral intermediate(s) formed during glutamine hydrolysis. Inhibited by the product CTP, via allosteric rather than competitive inhibition. Functionally, catalyzes the ATP-dependent amination of UTP to CTP with either L-glutamine or ammonia as the source of nitrogen. Regulates intracellular CTP levels through interactions with the four ribonucleotide triphosphates. In Francisella tularensis subsp. mediasiatica (strain FSC147), this protein is CTP synthase.